Consider the following 234-residue polypeptide: uncharacterized protein (234 aa).

6 consecutive transmembrane segments (helical) span residues 5-23 (LFYI…LWSF), 38-60 (IPTA…GFWV), 73-92 (AHIQ…AHGW), 127-149 (AITL…YIWL), 170-192 (GVAI…TVIS), and 197-217 (TQAG…ALAF).

It localises to the cell membrane. This is an uncharacterized protein from Archaeoglobus fulgidus (strain ATCC 49558 / DSM 4304 / JCM 9628 / NBRC 100126 / VC-16).